The sequence spans 443 residues: Trigger factor (443 aa).

The PPIase FKBP-type domain maps to 161-246 (ADGVTITYHG…VISVTAPRLP (86 aa)).

This sequence belongs to the FKBP-type PPIase family. Tig subfamily.

It localises to the cytoplasm. It catalyses the reaction [protein]-peptidylproline (omega=180) = [protein]-peptidylproline (omega=0). Functionally, involved in protein export. Acts as a chaperone by maintaining the newly synthesized protein in an open conformation. Functions as a peptidyl-prolyl cis-trans isomerase. The sequence is that of Trigger factor from Nitrosococcus oceani (strain ATCC 19707 / BCRC 17464 / JCM 30415 / NCIMB 11848 / C-107).